Consider the following 2114-residue polypeptide: Protein CELLULOSE SYNTHASE INTERACTIVE 2 (2114 aa).

ARM repeat units lie at residues 2–42, 46–87, 89–128, 135–177, 180–219, 222–262, 265–305, 354–394, 396–435, 479–519, 522–561, 563–595, 601–640, 643–682, 708–750, 774–816, 825–865, 870–910, 914–953, 994–1033, 1044–1083, 1087–1128, 1141–1182, 1185–1225, 1227–1264, 1265–1304, 1312–1353, 1355–1394, 1396–1435, 1454–1494, 1496–1525, 1526–1564, 1566–1605, 1606–1648, 1650–1689, 1690–1730, 1732–1771, 1772–1813, 1816–1855, 1857–1898, 1901–1940, and 1949–1993; these read TSEM…LLGL, KKEC…VLCK, KNVR…EVSL, NVGT…NLCG, DGFW…RLIR, TSSI…AITS, EEAI…SYGT, GDTR…SLFG, VDLS…NLCK, EESR…NLCC, EEIR…KLIK, ADPS…HVLA, EFVT…DLFS, KDLC…SLSN, AKTN…RVLR, SDVF…LLAK, HNPF…RFCK, LLGR…CAAK, TLWA…IQRP, PSNR…KWIA, PKVV…ALVR, DKTI…LVQN, ERVR…RIAD, DLSK…SLFR, PEIT…LCEL, FSSE…ALVK, RPDI…FLFT, EGLR…RLLD, KRFV…KMAK, ISQL…MVQP, LLIL…KPMV, LESL…SLLE, QRFQ…RSSV, TWPK…NILR, NPEH…ENQD, SSSV…RNPK, RETK…DISQ, HEGL…NFAM, RTSR…SLFS, HTLQ…TILT, PKLR…TLRQ, and TARS…CLPG. Residues 1974–2087 form the C2 domain; sequence SPAPSSFHER…LSEGSYSGIF (114 aa).

As to quaternary structure, associates with cellulase synthase (CESA) complexes. Binds to cortical microtubules.

Its subcellular location is the cell membrane. It is found in the cytoplasm. It localises to the cytoskeleton. In terms of biological role, regulator of the microtubular cytoskeleton. Microtubule-associated protein involved in the association of cellulase synthase (CESA) complexes (CSCs) and cortical microtubules. Promotes dynamics of CSCs in the plasma membrane. Regulates primary cell wall biosynthesis and cellulose microfibrils organization. The chain is Protein CELLULOSE SYNTHASE INTERACTIVE 2 from Arabidopsis thaliana (Mouse-ear cress).